A 143-amino-acid chain; its full sequence is Transthyretin-like protein 33 (143 aa).

An N-terminal signal peptide occupies residues 1 to 20 (MSRLACISSLFILCAIGSEA).

The protein belongs to the nematode transthyretin-like family. As to expression, expressed in head cells next to and anterior of the first pharyngeal bulb, the pharynx, and the hypodermis.

The protein resides in the secreted. In terms of biological role, protects dopaminergic neurons from degeneration caused by oxidative stress. The chain is Transthyretin-like protein 33 from Caenorhabditis elegans.